The chain runs to 157 residues: Small ribosomal subunit protein uS7 (157 aa).

This sequence belongs to the universal ribosomal protein uS7 family. As to quaternary structure, part of the 30S ribosomal subunit. Contacts proteins S9 and S11.

In terms of biological role, one of the primary rRNA binding proteins, it binds directly to 16S rRNA where it nucleates assembly of the head domain of the 30S subunit. Is located at the subunit interface close to the decoding center, probably blocks exit of the E-site tRNA. The protein is Small ribosomal subunit protein uS7 of Roseiflexus sp. (strain RS-1).